Reading from the N-terminus, the 140-residue chain is Ribosomal RNA large subunit methyltransferase H (140 aa).

Residues L58, G90, and 108–113 (LSLLTF) contribute to the S-adenosyl-L-methionine site.

The protein belongs to the RNA methyltransferase RlmH family. Homodimer.

It localises to the cytoplasm. The enzyme catalyses pseudouridine(1915) in 23S rRNA + S-adenosyl-L-methionine = N(3)-methylpseudouridine(1915) in 23S rRNA + S-adenosyl-L-homocysteine + H(+). Functionally, specifically methylates the pseudouridine at position 1915 (m3Psi1915) in 23S rRNA. The chain is Ribosomal RNA large subunit methyltransferase H from Protochlamydia amoebophila (strain UWE25).